The chain runs to 1437 residues: Envelopment polyprotein (1437 aa).

The N-terminal stretch at 1 to 21 (MAISTSLLIVALLIKLCLVNT) is a signal peptide. Topologically, residues 22–207 (APPISKCFQD…GYMASSICQN (186 aa)) are lumenal. N-linked (GlcNAc...) asparagine; by host glycans are attached at residues Asn-65 and Asn-88. A helical transmembrane segment spans residues 208–228 (IELIIIIILTLAIFIFMCIIT). Over 229-312 (RTYICYLMLP…RVARSLCKSK (84 aa)) the chain is Cytoplasmic. The helical transmembrane segment at 313 to 333 (GSSLVISILTAMLILSFITPL) threads the bilayer. Over 334-373 (EAMTTNYPDDKKFTLKEVNDIVLGRDMEQELKSSILILMS) the chain is Lumenal. A helical transmembrane segment spans residues 374 to 394 (ICGIGIILIFFGLTVLLEIVL). The Cytoplasmic segment spans residues 395–460 (ELIAKRSTIF…TYYIKIRNLK (66 aa)). The helical transmembrane segment at 461 to 481 (LIMLIFSIVILMQNATMLVVA) threads the bilayer. Topologically, residues 482-1391 (GENCWTNTEI…EPLNNFFGNY (910 aa)) are lumenal. N-linked (GlcNAc...) asparagine; by host glycans are attached at residues Asn-627 and Asn-1173. A helical membrane pass occupies residues 1392–1412 (LNMFLYILGGIILLFLALYIL). Residues 1413-1437 (MPMCARLRDELKRNERLHQMEMKKR) are Cytoplasmic-facing.

Belongs to the orthobunyavirus envelope glycoprotein family. In terms of assembly, glycoprotein C and Glycoprotein N interact with each other. In terms of processing, specific enzymatic cleavages in vivo yield mature proteins including nonstructural protein NSm, Glycoprotein C, and Glycoprotein N.

It localises to the virion membrane. It is found in the host Golgi apparatus membrane. Its subcellular location is the host endoplasmic reticulum membrane. Glycoprotein C and Glycoprotein N interact with each other and are present at the surface of the virion. They are able to attach the virion to a cell receptor and to promote fusion of membranes after endocytosis of the virion. The chain is Envelopment polyprotein (GP) from Culex.